A 311-amino-acid polypeptide reads, in one-letter code: Cytochrome c biogenesis protein CcsA (311 aa).

A run of 8 helical transmembrane segments spans residues 11–31 (VLLL…LAFW), 44–64 (VVQL…LWRW), 68–88 (GHFP…GCTF), 101–121 (LVPA…SFAL), 146–166 (VIMM…AVLF), 217–237 (TITV…VWAN), 251–268 (TWAL…HTRL), and 280–300 (VAVS…LLGI).

It belongs to the CcmF/CycK/Ccl1/NrfE/CcsA family. As to quaternary structure, may interact with ccs1.

It is found in the cellular thylakoid membrane. Functionally, required during biogenesis of c-type cytochromes (cytochrome c6 and cytochrome f) at the step of heme attachment. This chain is Cytochrome c biogenesis protein CcsA, found in Synechococcus sp. (strain RCC307).